The following is a 197-amino-acid chain: Xanthine phosphoribosyltransferase (197 aa).

Positions 20 and 27 each coordinate xanthine. 128–132 (ANGQA) contributes to the 5-phospho-alpha-D-ribose 1-diphosphate binding site. Lysine 156 provides a ligand contact to xanthine.

Belongs to the purine/pyrimidine phosphoribosyltransferase family. Xpt subfamily. Homodimer.

It is found in the cytoplasm. The catalysed reaction is XMP + diphosphate = xanthine + 5-phospho-alpha-D-ribose 1-diphosphate. It functions in the pathway purine metabolism; XMP biosynthesis via salvage pathway; XMP from xanthine: step 1/1. Converts the preformed base xanthine, a product of nucleic acid breakdown, to xanthosine 5'-monophosphate (XMP), so it can be reused for RNA or DNA synthesis. This chain is Xanthine phosphoribosyltransferase, found in Bacillus cereus (strain B4264).